Here is a 593-residue protein sequence, read N- to C-terminus: Aspartate--tRNA(Asp/Asn) ligase (593 aa).

Residue Glu175 coordinates L-aspartate. An aspartate region spans residues 199-202 (QQYK). Positions 221 and 452 each coordinate L-aspartate. Residue 221–223 (RDE) participates in ATP binding. Glu486 is a binding site for ATP. Arg493 is a binding site for L-aspartate. 538–541 (GVDR) provides a ligand contact to ATP.

It belongs to the class-II aminoacyl-tRNA synthetase family. Type 1 subfamily. Homodimer.

It is found in the cytoplasm. It carries out the reaction tRNA(Asx) + L-aspartate + ATP = L-aspartyl-tRNA(Asx) + AMP + diphosphate. In terms of biological role, aspartyl-tRNA synthetase with relaxed tRNA specificity since it is able to aspartylate not only its cognate tRNA(Asp) but also tRNA(Asn). Reaction proceeds in two steps: L-aspartate is first activated by ATP to form Asp-AMP and then transferred to the acceptor end of tRNA(Asp/Asn). This is Aspartate--tRNA(Asp/Asn) ligase from Novosphingobium aromaticivorans (strain ATCC 700278 / DSM 12444 / CCUG 56034 / CIP 105152 / NBRC 16084 / F199).